Consider the following 277-residue polypeptide: UPF0276 protein PSEEN3355 (277 aa).

Belongs to the UPF0276 family.

This is UPF0276 protein PSEEN3355 from Pseudomonas entomophila (strain L48).